The chain runs to 542 residues: MTMEPNSTTSDHILDWLEGSVSFFPSFLDEPCNNSGYIQEYHLWDQYQTDANTGSSPNATNSTTATIVATSATSTTSLEPCGSNNNQPLSDLPKKRNATDESSLKPPQNKNKRIKTRPMNEPENGDAVRKNKKGGAKANGSNCNSGNSKEGRWAEQLLNPCAAAIAGGNVNRVQHLLYVLHELASPTGDPNHRLAAHGLRALTHHLSSSSSSPTSSGTITFASTEPRFFQKSLLKFYEVSPWFSFPNNIANASILQVLAEEANITSRTLHILDIGVSHGVQWPTLLDALSRRSGGPPSVVRLTVVTAENDQNMETPFSKAPPGYNYYPRLLGYAQSININLQINRIENHSLQTLNAQSISASPDEILIVCAQFRLHHLNHNSPDERSEFLKVLRNMEPRGVILSENNTECCCSGCGNFAAGFTRRVEYLWRFLDSTSSAFKGRESDERRVMEGEAAKALTNQREMNEEKEKWCGRMKEAGFAGEVFGEDAVDGGRALLRKYDSNWEMKVEEKNTSVGLWWKGQPVSFCSLWKLDGNDQGGTS.

Residues T73–E150 are disordered. The segment covering L92 to S103 has biased composition (basic and acidic residues). The segment covering A136–S148 has biased composition (low complexity). In terms of domain architecture, GRAS spans S145 to K532. The tract at residues R152–T214 is leucine repeat I (LRI). The tract at residues L233–G332 is VHIID. The VHIID motif lies at L269–D273. The tract at residues Y333–Q357 is leucine repeat II (LRII). Residues L367–E452 form a PFYRE region. The segment at A455 to K532 is SAW.

It belongs to the GRAS family. As to expression, highly expressed in roots.

Its subcellular location is the nucleus. Functionally, transcriptional regulator essential for Nod-factor-induced gene expression. Acts downstream of calcium spiking and a calcium/calmodulin-dependent protein kinase required for activation of early nodulation gene expression. Acts as a common symbiosis gene that positively contributes to the early steps of the arbuscular mycorrhizal fungus and rhizobial infection processes in roots. Transcription factor involved in the positive regulation of the beta-carotene isomerase D27, which participates in a pathway leading to biosynthesis of strigolactones in roots. In Lotus japonicus (Lotus corniculatus var. japonicus), this protein is Protein NODULATION SIGNALING PATHWAY 1.